A 576-amino-acid polypeptide reads, in one-letter code: uncharacterized protein (576 aa).

Topologically, residues 1–8 (MSLSLGAA) are cytoplasmic. The helical transmembrane segment at 9–29 (IYIALKPIFKIYTIMLVGYLV) threads the bilayer. The Extracellular segment spans residues 30-45 (AKFDIVSMENAKGISN). Residues 46 to 66 (MVVNAILPCLTFNKIVSNISW) form a helical membrane-spanning segment. Residues 67–71 (RDIKE) are Cytoplasmic-facing. The helical transmembrane segment at 72-92 (IGVIILSAFILFVLGATGALF) threads the bilayer. The Extracellular segment spans residues 93-103 (TTFATTVPKKF). The helical transmembrane segment at 104–124 (FWGLIFAGFFPNISDLPIAYI) threads the bilayer. At 125-141 (QSMGNGSIFTAEEADKG) the chain is on the cytoplasmic side. Residues 142 to 162 (VAYSCIFLFIQSFLMMNFGMW) traverse the membrane as a helical segment. Residues 163 to 400 (RVVGLDFRDT…FIINCLRPAS (238 aa)) are Extracellular-facing. Residues 401 to 421 (LGAILGIICALIPWVKACFVT) traverse the membrane as a helical segment. The Cytoplasmic segment spans residues 422 to 437 (TYVHVHKAPDGEPVLN). The helical transmembrane segment at 438–458 (FLMDFTEYIGNACVPLGLLLL) threads the bilayer. The Extracellular portion of the chain corresponds to 459–476 (GGTLARLEIKSLPPGFIK). Residues 477 to 497 (SALLMTCFRLIVIPIIGVLWV) traverse the membrane as a helical segment. Residues 498-512 (NKLYSIDWLDTGIGK) are Cytoplasmic-facing. A helical transmembrane segment spans residues 513 to 533 (FDMILTWSMPSATAQVYFTAF). Topologically, residues 534 to 545 (YTPACGDHIQMN) are extracellular. Residues 546–566 (CLSVLFVMQYAILFITVAFVV) traverse the membrane as a helical segment. The Cytoplasmic portion of the chain corresponds to 567–576 (TYTLKVDLKV).

This sequence belongs to the auxin efflux carrier (TC 2.A.69) family.

It localises to the membrane. This is an uncharacterized protein from Saccharomyces cerevisiae (strain ATCC 204508 / S288c) (Baker's yeast).